The primary structure comprises 256 residues: Membrane-anchored junction protein (256 aa).

The Nuclear portion of the chain corresponds to 1–232 (MSLKPFTYPF…HSSPPPPKEP (232 aa)). Disordered stretches follow at residues 143-197 (KRKL…TPAS) and 211-235 (HGLQ…PGAR). Residues 164 to 173 (ETSSEASSNK) are compositionally biased toward polar residues. Over residues 175 to 184 (PLKESKRSTD) the composition is skewed to basic and acidic residues. A helical membrane pass occupies residues 233 to 251 (GARGFLGFLSALFPFRYFF). The Perinuclear space portion of the chain corresponds to 252 to 256 (KKSGQ).

It belongs to the MAJIN family. In terms of assembly, component of the MAJIN-TERB1-TERB2 complex, composed of MAJIN, TERB1 and TERB2. Specifically expressed in germline tissues.

The protein localises to the nucleus inner membrane. Its subcellular location is the chromosome. It is found in the telomere. Meiosis-specific telomere-associated protein involved in meiotic telomere attachment to the nucleus inner membrane, a crucial step for homologous pairing and synapsis. Component of the MAJIN-TERB1-TERB2 complex, which promotes telomere cap exchange by mediating attachment of telomeric DNA to the inner nuclear membrane and replacement of the protective cap of telomeric chromosomes: in early meiosis, the MAJIN-TERB1-TERB2 complex associates with telomeric DNA and the shelterin/telosome complex. During prophase, the complex matures and promotes release of the shelterin/telosome complex from telomeric DNA. In the complex, MAJIN acts as the anchoring subunit to the nucleus inner membrane. MAJIN shows DNA-binding activity, possibly for the stabilization of telomere attachment on the nucleus inner membrane. The chain is Membrane-anchored junction protein from Mus musculus (Mouse).